A 667-amino-acid polypeptide reads, in one-letter code: Probable oxidoreductase YyaE (667 aa).

In terms of domain architecture, 4Fe-4S Mo/W bis-MGD-type spans 2–59 (SKVHQSACPLNCWDSCGFLVTVDDGKVTKVDGDPNHPITEGKICGRGRMLETKTNSPD). Cysteine 9, cysteine 13, cysteine 17, and cysteine 45 together coordinate [4Fe-4S] cluster.

The protein belongs to the prokaryotic molybdopterin-containing oxidoreductase family. Mo-bis(molybdopterin guanine dinucleotide) serves as cofactor.

This is Probable oxidoreductase YyaE (yyaE) from Bacillus subtilis (strain 168).